We begin with the raw amino-acid sequence, 896 residues long: Putative mannosylglycerate hydrolase (896 aa).

4 residues coordinate a divalent metal cation: His12, Asp14, Asp125, and His348. Asp125 acts as the Nucleophile in catalysis.

The protein belongs to the glycosyl hydrolase 38 family. It depends on a divalent metal cation as a cofactor.

The catalysed reaction is (2R)-2-O-(6-phospho-alpha-D-mannosyl)-glycerate + H2O = alpha-D-mannose 6-phosphate + (R)-glycerate. In terms of biological role, may hydrolyze 6-phospho-mannosyl-D-glycerate to mannose-6-phosphate and glycerate. The protein is Putative mannosylglycerate hydrolase (mngB) of Halalkalibacterium halodurans (strain ATCC BAA-125 / DSM 18197 / FERM 7344 / JCM 9153 / C-125) (Bacillus halodurans).